We begin with the raw amino-acid sequence, 259 residues long: Gem-associated protein 2 (259 aa).

The protein belongs to the gemin-2 family. Forms a stable heteromeric complex with survival of motor neuron protein (SMN), GEMIN3 and GEMIN4. The SMN complex is associated with the spliceosomal snRNAs U1 and U5 in the cytoplasm of oocytes.

It localises to the nucleus. Its subcellular location is the gem. The protein resides in the cytoplasm. The SMN complex catalyzes the assembly of small nuclear ribonucleoproteins (snRNPs), the building blocks of the spliceosome, and thereby plays an important role in the splicing of cellular pre-mRNAs. Most spliceosomal snRNPs contain a common set of Sm proteins SNRPB, SNRPD1, SNRPD2, SNRPD3, SNRPE, SNRPF and SNRPG that assemble in a heptameric protein ring on the Sm site of the small nuclear RNA to form the core snRNP (Sm core). In the cytosol, the Sm proteins SNRPD1, SNRPD2, SNRPE, SNRPF and SNRPG (5Sm) are trapped in an inactive 6S pICln-Sm complex by the chaperone CLNS1A that controls the assembly of the core snRNP. To assemble core snRNPs, the SMN complex accepts the trapped 5Sm proteins from CLNS1A. Binding of snRNA inside 5Sm ultimately triggers eviction of the SMN complex, thereby allowing binding of SNRPD3 and SNRPB to complete assembly of the core snRNP. Within the SMN complex, GEMIN2 constrains the conformation of 5Sm, thereby promoting 5Sm binding to snRNA containing the snRNP code (a nonameric Sm site and a 3'-adjacent stem-loop), thus preventing progression of assembly until a cognate substrate is bound. The protein is Gem-associated protein 2 (gemin2) of Xenopus laevis (African clawed frog).